The following is a 127-amino-acid chain: Group 3 truncated hemoglobin ctb (127 aa).

The heme site is built by Y64 and H72.

Belongs to the truncated hemoglobin family. Group III subfamily. Monomer. The cofactor is heme.

It is found in the cytoplasm. Functionally, has been suggested to be involved in cytochrome c peroxidase or P450-like oxygen chemistry or cyanide detoxification. The high oxygen affinity of this protein suggests that it probably does not function as an oxygen transporter. In Campylobacter jejuni subsp. jejuni serotype O:2 (strain ATCC 700819 / NCTC 11168), this protein is Group 3 truncated hemoglobin ctb (ctb).